Here is a 326-residue protein sequence, read N- to C-terminus: tRNA-modifying protein YgfZ (326 aa).

Residues Trp-27 and Trp-189 each contribute to the folate site.

Belongs to the tRNA-modifying YgfZ family.

The protein localises to the cytoplasm. Its function is as follows. Folate-binding protein involved in regulating the level of ATP-DnaA and in the modification of some tRNAs. It is probably a key factor in regulatory networks that act via tRNA modification, such as initiation of chromosomal replication. This is tRNA-modifying protein YgfZ from Enterobacter sp. (strain 638).